Here is a 384-residue protein sequence, read N- to C-terminus: Outer membrane protein assembly factor BamB (384 aa).

The first 21 residues, 1-21 (MKLTLKRKFIAVLALTSLLGA), serve as a signal peptide directing secretion. The N-palmitoyl cysteine moiety is linked to residue cysteine 22. Residue cysteine 22 is the site of S-diacylglycerol cysteine attachment.

This sequence belongs to the BamB family. Part of the Bam complex.

Its subcellular location is the cell outer membrane. Functionally, part of the outer membrane protein assembly complex, which is involved in assembly and insertion of beta-barrel proteins into the outer membrane. This is Outer membrane protein assembly factor BamB from Taylorella asinigenitalis (strain MCE3).